A 198-amino-acid polypeptide reads, in one-letter code: Ribonuclease HII 1 (198 aa).

The region spanning 7–196 (ELTAGVDEAG…VRAALARAAA (190 aa)) is the RNase H type-2 domain. A divalent metal cation is bound by residues Asp-13, Glu-14, and Asp-105.

The protein belongs to the RNase HII family. The cofactor is Mn(2+). Mg(2+) is required as a cofactor.

The protein localises to the cytoplasm. It carries out the reaction Endonucleolytic cleavage to 5'-phosphomonoester.. Endonuclease that specifically degrades the RNA of RNA-DNA hybrids. The sequence is that of Ribonuclease HII 1 from Methylibium petroleiphilum (strain ATCC BAA-1232 / LMG 22953 / PM1).